We begin with the raw amino-acid sequence, 127 residues long: Translation initiation factor 5A (127 aa).

Hypusine is present on lysine 35.

The protein belongs to the eIF-5A family.

The protein localises to the cytoplasm. Functions by promoting the formation of the first peptide bond. The protein is Translation initiation factor 5A of Methanococcoides burtonii (strain DSM 6242 / NBRC 107633 / OCM 468 / ACE-M).